A 724-amino-acid chain; its full sequence is Propionyl-CoA carboxylase alpha chain, mitochondrial (724 aa).

The 448-residue stretch at 48–495 (KFDKILIANR…TTKYLPEVYP (448 aa)) folds into the Biotin carboxylation domain. ATP is bound by residues K163, 195–256 (SRDI…PRHI), E247, and N282. In terms of domain architecture, ATP-grasp spans 167–364 (KKIATAARVS…IVQQMLRVSY (198 aa)). Positions 322, 335, and 337 each coordinate Mg(2+). Positions 322, 335, and 337 each coordinate Mn(2+). R339 is an active-site residue. Biotin is bound at residue F395. A Biotinyl-binding domain is found at 649 to 724 (KAKVDLSTVV…DEGEVLVELE (76 aa)). N6-biotinyllysine is present on K690.

In terms of assembly, the holoenzyme is a dodecamer composed of 6 alpha subunits and 6 beta subunits. Interacts with sir-2.2 and sir-2.3. Biotin is required as a cofactor. Mg(2+) serves as cofactor. The cofactor is Mn(2+). Post-translationally, the biotin cofactor is covalently attached to the C-terminal biotinyl-binding domain and is required for the catalytic activity.

It is found in the mitochondrion matrix. It carries out the reaction propanoyl-CoA + hydrogencarbonate + ATP = (S)-methylmalonyl-CoA + ADP + phosphate + H(+). The catalysed reaction is butanoyl-CoA + hydrogencarbonate + ATP = (2S)-ethylmalonyl-CoA + ADP + phosphate + H(+). The protein operates within metabolic intermediate metabolism; propanoyl-CoA degradation; succinyl-CoA from propanoyl-CoA: step 1/3. Its function is as follows. This is one of the 2 subunits of the biotin-dependent propionyl-CoA carboxylase (PCC), a mitochondrial enzyme involved in the catabolism of odd chain fatty acids, branched-chain amino acids isoleucine, threonine, methionine, and valine and other metabolites. Propionyl-CoA carboxylase catalyzes the carboxylation of propionyl-CoA/propanoyl-CoA to D-methylmalonyl-CoA/(S)-methylmalonyl-CoA. Within the holoenzyme, the alpha subunit catalyzes the ATP-dependent carboxylation of the biotin carried by the biotin carboxyl carrier (BCC) domain, while the beta subunit then transfers the carboxyl group from carboxylated biotin to propionyl-CoA. Propionyl-CoA carboxylase also significantly acts on butyryl-CoA/butanoyl-CoA, which is converted to ethylmalonyl-CoA/(2S)-ethylmalonyl-CoA. Other alternative minor substrates include (2E)-butenoyl-CoA/crotonoyl-CoA. This Caenorhabditis elegans protein is Propionyl-CoA carboxylase alpha chain, mitochondrial (pcca-1).